We begin with the raw amino-acid sequence, 226 residues long: Exosome complex component Rrp4 (226 aa).

Residues N61–R135 form the S1 motif domain. A KH domain is found at D141–I200.

Belongs to the RRP4 family. In terms of assembly, component of the archaeal exosome complex. Forms a trimer of Rrp4 and/or Csl4 subunits. The trimer associates with a hexameric ring-like arrangement composed of 3 Rrp41-Rrp42 heterodimers.

It is found in the cytoplasm. In terms of biological role, non-catalytic component of the exosome, which is a complex involved in RNA degradation. Increases the RNA binding and the efficiency of RNA degradation. Confers strong poly(A) specificity to the exosome. In Nitrosopumilus maritimus (strain SCM1), this protein is Exosome complex component Rrp4.